Here is a 457-residue protein sequence, read N- to C-terminus: Protein translocase subunit SecY (457 aa).

A run of 10 helical transmembrane segments spans residues 17-37, 75-95, 120-140, 163-183, 195-215, 230-250, 287-307, 326-346, 386-406, and 412-432; these read IFFT…PVPG, IALG…LVVF, LFTL…ALRM, VFYL…MWIG, ISLI…GSIF, IVSL…TVLI, VIPV…GQFL, VVYS…WTAT, LLGA…GRIL, and VSYF…LDTM.

The protein belongs to the SecY/SEC61-alpha family. As to quaternary structure, component of the Sec protein translocase complex. Heterotrimer consisting of SecY, SecE and SecG subunits. The heterotrimers can form oligomers, although 1 heterotrimer is thought to be able to translocate proteins. Interacts with the ribosome. Interacts with SecDF, and other proteins may be involved. Interacts with SecA.

The protein resides in the cell inner membrane. The central subunit of the protein translocation channel SecYEG. Consists of two halves formed by TMs 1-5 and 6-10. These two domains form a lateral gate at the front which open onto the bilayer between TMs 2 and 7, and are clamped together by SecE at the back. The channel is closed by both a pore ring composed of hydrophobic SecY resides and a short helix (helix 2A) on the extracellular side of the membrane which forms a plug. The plug probably moves laterally to allow the channel to open. The ring and the pore may move independently. The protein is Protein translocase subunit SecY of Chlamydia muridarum (strain MoPn / Nigg).